The primary structure comprises 446 residues: Phosphoglucosamine mutase (446 aa).

The active-site Phosphoserine intermediate is the serine 99. 4 residues coordinate Mg(2+): serine 99, aspartate 242, aspartate 244, and aspartate 246. Position 99 is a phosphoserine (serine 99).

Belongs to the phosphohexose mutase family. Mg(2+) serves as cofactor. In terms of processing, activated by phosphorylation.

It carries out the reaction alpha-D-glucosamine 1-phosphate = D-glucosamine 6-phosphate. Functionally, catalyzes the conversion of glucosamine-6-phosphate to glucosamine-1-phosphate. The polypeptide is Phosphoglucosamine mutase (Campylobacter hominis (strain ATCC BAA-381 / DSM 21671 / CCUG 45161 / LMG 19568 / NCTC 13146 / CH001A)).